The following is a 218-amino-acid chain: UPF0598 protein C8orf82 homolog (218 aa).

This sequence belongs to the UPF0598 family.

This Bos taurus (Bovine) protein is UPF0598 protein C8orf82 homolog.